A 593-amino-acid polypeptide reads, in one-letter code: Proline--tRNA ligase (593 aa).

This sequence belongs to the class-II aminoacyl-tRNA synthetase family. ProS type 1 subfamily. Homodimer.

The protein resides in the cytoplasm. The catalysed reaction is tRNA(Pro) + L-proline + ATP = L-prolyl-tRNA(Pro) + AMP + diphosphate. In terms of biological role, catalyzes the attachment of proline to tRNA(Pro) in a two-step reaction: proline is first activated by ATP to form Pro-AMP and then transferred to the acceptor end of tRNA(Pro). As ProRS can inadvertently accommodate and process non-cognate amino acids such as alanine and cysteine, to avoid such errors it has two additional distinct editing activities against alanine. One activity is designated as 'pretransfer' editing and involves the tRNA(Pro)-independent hydrolysis of activated Ala-AMP. The other activity is designated 'posttransfer' editing and involves deacylation of mischarged Ala-tRNA(Pro). The misacylated Cys-tRNA(Pro) is not edited by ProRS. In Parasynechococcus marenigrum (strain WH8102), this protein is Proline--tRNA ligase.